The chain runs to 609 residues: Pentatricopeptide repeat-containing protein At5g13770, chloroplastic (609 aa).

A chloroplast-targeting transit peptide spans M1–R44. PPR repeat units follow at residues E103 to P137, D138 to D168, A172 to P207, S208 to F242, S247 to E281, S282 to K316, D317 to V351, T352 to A386, G387 to K421, C422 to P456, N457 to P491, D492 to I526, and D527 to L561.

It belongs to the PPR family. P subfamily.

The protein localises to the plastid. Its subcellular location is the chloroplast. The chain is Pentatricopeptide repeat-containing protein At5g13770, chloroplastic from Arabidopsis thaliana (Mouse-ear cress).